A 355-amino-acid polypeptide reads, in one-letter code: Glycerol-3-phosphate dehydrogenase [NAD(P)+] (355 aa).

Residues Ser14, Trp15, Arg35, and Lys117 each contribute to the NADPH site. Positions 117, 147, and 149 each coordinate sn-glycerol 3-phosphate. An NADPH-binding site is contributed by Ala151. The sn-glycerol 3-phosphate site is built by Lys202, Asp255, Ser265, Arg266, and Asn267. The Proton acceptor role is filled by Lys202. Arg266 provides a ligand contact to NADPH. Residues Ile290 and Glu292 each coordinate NADPH.

This sequence belongs to the NAD-dependent glycerol-3-phosphate dehydrogenase family.

It localises to the cytoplasm. It catalyses the reaction sn-glycerol 3-phosphate + NAD(+) = dihydroxyacetone phosphate + NADH + H(+). It carries out the reaction sn-glycerol 3-phosphate + NADP(+) = dihydroxyacetone phosphate + NADPH + H(+). Its pathway is membrane lipid metabolism; glycerophospholipid metabolism. Functionally, catalyzes the reduction of the glycolytic intermediate dihydroxyacetone phosphate (DHAP) to sn-glycerol 3-phosphate (G3P), the key precursor for phospholipid synthesis. This chain is Glycerol-3-phosphate dehydrogenase [NAD(P)+], found in Lawsonia intracellularis (strain PHE/MN1-00).